A 975-amino-acid chain; its full sequence is Glycine dehydrogenase (decarboxylating) (975 aa).

K723 bears the N6-(pyridoxal phosphate)lysine mark.

This sequence belongs to the GcvP family. In terms of assembly, the glycine cleavage system is composed of four proteins: P, T, L and H. It depends on pyridoxal 5'-phosphate as a cofactor.

The enzyme catalyses N(6)-[(R)-lipoyl]-L-lysyl-[glycine-cleavage complex H protein] + glycine + H(+) = N(6)-[(R)-S(8)-aminomethyldihydrolipoyl]-L-lysyl-[glycine-cleavage complex H protein] + CO2. Functionally, the glycine cleavage system catalyzes the degradation of glycine. The P protein binds the alpha-amino group of glycine through its pyridoxal phosphate cofactor; CO(2) is released and the remaining methylamine moiety is then transferred to the lipoamide cofactor of the H protein. This is Glycine dehydrogenase (decarboxylating) from Burkholderia pseudomallei (strain 668).